Here is a 291-residue protein sequence, read N- to C-terminus: 33 kDa chaperonin (291 aa).

2 cysteine pairs are disulfide-bonded: cysteine 236–cysteine 238 and cysteine 269–cysteine 272.

It belongs to the HSP33 family. In terms of processing, under oxidizing conditions two disulfide bonds are formed involving the reactive cysteines. Under reducing conditions zinc is bound to the reactive cysteines and the protein is inactive.

Its subcellular location is the cytoplasm. Functionally, redox regulated molecular chaperone. Protects both thermally unfolding and oxidatively damaged proteins from irreversible aggregation. Plays an important role in the bacterial defense system toward oxidative stress. In Lactobacillus johnsonii (strain CNCM I-12250 / La1 / NCC 533), this protein is 33 kDa chaperonin.